A 178-amino-acid chain; its full sequence is Acireductone dioxygenase (178 aa).

Residues H100, H102, E106, and H145 each coordinate Fe(2+). Ni(2+) contacts are provided by H100, H102, E106, and H145.

It belongs to the acireductone dioxygenase (ARD) family. Monomer. Requires Fe(2+) as cofactor. It depends on Ni(2+) as a cofactor.

The enzyme catalyses 1,2-dihydroxy-5-(methylsulfanyl)pent-1-en-3-one + O2 = 3-(methylsulfanyl)propanoate + CO + formate + 2 H(+). It carries out the reaction 1,2-dihydroxy-5-(methylsulfanyl)pent-1-en-3-one + O2 = 4-methylsulfanyl-2-oxobutanoate + formate + 2 H(+). It functions in the pathway amino-acid biosynthesis; L-methionine biosynthesis via salvage pathway; L-methionine from S-methyl-5-thio-alpha-D-ribose 1-phosphate: step 5/6. Its function is as follows. Catalyzes 2 different reactions between oxygen and the acireductone 1,2-dihydroxy-3-keto-5-methylthiopentene (DHK-MTPene) depending upon the metal bound in the active site. Fe-containing acireductone dioxygenase (Fe-ARD) produces formate and 2-keto-4-methylthiobutyrate (KMTB), the alpha-ketoacid precursor of methionine in the methionine recycle pathway. Ni-containing acireductone dioxygenase (Ni-ARD) produces methylthiopropionate, carbon monoxide and formate, and does not lie on the methionine recycle pathway. This chain is Acireductone dioxygenase (mtnD), found in Bacillus subtilis (strain 168).